Reading from the N-terminus, the 150-residue chain is uncharacterized protein (150 aa).

Positions 1 to 39 (MKQRFSQVATVIFFVMSIRSPRNLGFFFTLALFVVLVCS) are cleaved as a signal peptide.

This is an uncharacterized protein from Saccharomyces cerevisiae (strain ATCC 204508 / S288c) (Baker's yeast).